The following is a 478-amino-acid chain: Zinc metalloproteinase/disintegrin (478 aa).

Positions 1–20 (MIQVLLVTICLAAFPYQGSS) are cleaved as a signal peptide. Positions 21 to 187 (IILESGNVND…PIKKASDLNL (167 aa)) are excised as a propeptide. A Peptidase M12B domain is found at 193-389 (RYVELFIVVD…QKPQCILKKP (197 aa)). 3 disulfide bridges follow: C304–C384, C344–C368, and C346–C351. Residue H329 participates in Zn(2+) binding. E330 is a catalytic residue. Zn(2+) contacts are provided by H333 and H339. A propeptide spanning residues 390–407 (LRTDTVSTPVSGNELLEA) is cleaved from the precursor. Positions 397–478 (TPVSGNELLE…ADCPRNGLYG (82 aa)) constitute a Disintegrin domain. Disulfide bonds link C411–C426, C413–C421, C420–C443, C434–C440, C439–C464, and C452–C471. The Cell attachment site; atypical (MVD) motif lies at 456–458 (MVD).

The protein belongs to the venom metalloproteinase (M12B) family. P-II subfamily. P-IIa sub-subfamily. Monomer (disintegrin). Zn(2+) is required as a cofactor. As to expression, expressed by the venom gland.

It is found in the secreted. The catalysed reaction is Cleavage of 3-Asn-|-Gln-4, 9-Ser-|-His-10 and 14-Ala-|-Leu-15 bonds in insulin B chain and 14-Tyr-|-Gln-15 and 8-Thr-|-Ser-9 in A chain. Cleaves type IV collagen at 73-Ala-|-Gln-74 in alpha1-(IV) and at 7-Gly-|-Leu-8 in alpha2-(IV).. In terms of biological role, snake venom zinc metalloproteinase that causes hemorrhage by provoking the degradation of the sub-endothelial matrix proteins (fibronectin, laminin, type IV collagen, nidogen, and gelatins). Its function is as follows. Potent inhibitor of both collagen- (IC(50)=4 nM) and ADP-induced (IC(50)=8 nM) platelet aggregation. May act by binding to the platelet receptor GPIIb/GPIIIa (ITGA2B/ITGB3). The protein is Zinc metalloproteinase/disintegrin of Crotalus atrox (Western diamondback rattlesnake).